The chain runs to 131 residues: Acanthoscurrin-2 (131 aa).

At Lys-130 the chain carries Lysine amide.

As to expression, expressed in hemocytes and secreted into the plasma following bacterial immune challenge.

Its subcellular location is the secreted. Functionally, antimicrobial protein. Strong activity against the Gram-negative bacterium E.coli SBS363 and yeast C.albicans. No detectable activity against the Gram-positive bacterium M.luteus. This chain is Acanthoscurrin-2, found in Acanthoscurria gomesiana (Tarantula spider).